A 286-amino-acid polypeptide reads, in one-letter code: Lipoyl synthase (286 aa).

C38, C43, C49, C64, C68, C71, and S276 together coordinate [4Fe-4S] cluster. The Radical SAM core domain occupies 50–265 (WEQGVATFMI…ENIALDMGFL (216 aa)).

This sequence belongs to the radical SAM superfamily. Lipoyl synthase family. Requires [4Fe-4S] cluster as cofactor.

The protein resides in the cytoplasm. The enzyme catalyses [[Fe-S] cluster scaffold protein carrying a second [4Fe-4S](2+) cluster] + N(6)-octanoyl-L-lysyl-[protein] + 2 oxidized [2Fe-2S]-[ferredoxin] + 2 S-adenosyl-L-methionine + 4 H(+) = [[Fe-S] cluster scaffold protein] + N(6)-[(R)-dihydrolipoyl]-L-lysyl-[protein] + 4 Fe(3+) + 2 hydrogen sulfide + 2 5'-deoxyadenosine + 2 L-methionine + 2 reduced [2Fe-2S]-[ferredoxin]. It functions in the pathway protein modification; protein lipoylation via endogenous pathway; protein N(6)-(lipoyl)lysine from octanoyl-[acyl-carrier-protein]: step 2/2. Catalyzes the radical-mediated insertion of two sulfur atoms into the C-6 and C-8 positions of the octanoyl moiety bound to the lipoyl domains of lipoate-dependent enzymes, thereby converting the octanoylated domains into lipoylated derivatives. This Karelsulcia muelleri (strain GWSS) (Sulcia muelleri) protein is Lipoyl synthase.